Here is a 111-residue protein sequence, read N- to C-terminus: MASFDYLFHPFVPCTICPDFPLYKSPAFPSSCLHHPRLLFNDKAFCPLFLVPFPASFTRWLTFLFHLVIYNNKMHHHTYAPHIHDLRAALDTTAPQKKCPKETLHRSDHQG.

The helical transmembrane segment at 48-70 threads the bilayer; sequence LFLVPFPASFTRWLTFLFHLVIY.

It localises to the membrane. This is an uncharacterized protein from Saccharomyces cerevisiae (strain ATCC 204508 / S288c) (Baker's yeast).